The sequence spans 748 residues: Meprin A subunit alpha (748 aa).

Positions 1–20 (MLWTLPVCLLSLSFSAHIAA) are cleaved as a signal peptide. A propeptide spanning residues 21–66 (VSIQHLSTGHDHDDVDVGEQQKDISEINSAAGLNLFQGDILLPRTR) is cleaved from the precursor. In terms of domain architecture, Peptidase M12A spans 67 to 261 (NALRDPSSRW…TRLNRMYNCT (195 aa)). Over 67–719 (NALRDPSSRW…RCQAMHVHGS (653 aa)) the chain is Extracellular. Cystine bridges form between Cys108–Cys260, Cys129–Cys148, and Cys270–Cys432. N-linked (GlcNAc...) asparagine glycosylation is present at Asn141. Zn(2+) is bound at residue His156. The active site involves Glu157. Residues His160 and His166 each coordinate Zn(2+). Residues Asn223, Asn259, Asn319, Asn441, and Asn542 are each glycosylated (N-linked (GlcNAc...) asparagine). An MAM domain is found at 265–434 (TLLDHCAFEK…ITLTETPCPT (170 aa)). The MATH domain maps to 435 to 596 (GVWTIRNISQ…DDTLIIFVDF (162 aa)). Residues 641–668 (LPRRLDQRQPSRPKRSVENTGPMEDHNW) are disordered. The 41-residue stretch at 672–712 (FRDPCDPNPCQNEGTCVNVKGMASCRCVSGHAFFYTGERCQ) folds into the EGF-like domain. Disulfide bonds link Cys676-Cys687, Cys681-Cys696, and Cys698-Cys711. A helical membrane pass occupies residues 720-739 (LLGLLIGCITALIFLTFITF). The Cytoplasmic portion of the chain corresponds to 740 to 748 (SNTYQKLRQ).

As to quaternary structure, homotetramer consisting of disulfide-linked alpha subunits, homooligomer consisting of disulfide-linked alpha subunit homodimers, or heterotetramer of two alpha and two beta subunits formed by non-covalent association of two disulfide-linked heterodimers. Interacts with MBL2 through its carbohydrate moiety. This interaction may inhibit its catalytic activity. The cofactor is Zn(2+). In terms of processing, N-glycosylated; contains GlcNAc, galactose, mannose and a small amount of fucose. In terms of tissue distribution, colocalized with E-24.11 in proximal tubules of juxtamedullary nephrons.

The protein resides in the membrane. The enzyme catalyses Hydrolysis of protein and peptide substrates preferentially on carboxyl side of hydrophobic residues.. Inhibited by actinonin. In Rattus norvegicus (Rat), this protein is Meprin A subunit alpha (Mep1a).